Consider the following 1180-residue polypeptide: DNA-directed RNA polymerase subunit beta' (1180 aa).

Positions 60, 62, 75, and 78 each coordinate Zn(2+). Aspartate 449, aspartate 451, and aspartate 453 together coordinate Mg(2+). Residues cysteine 792, cysteine 872, cysteine 879, and cysteine 882 each coordinate Zn(2+).

Belongs to the RNA polymerase beta' chain family. As to quaternary structure, the RNAP catalytic core consists of 2 alpha, 1 beta, 1 beta' and 1 omega subunit. When a sigma factor is associated with the core the holoenzyme is formed, which can initiate transcription. Mg(2+) is required as a cofactor. Zn(2+) serves as cofactor.

It catalyses the reaction RNA(n) + a ribonucleoside 5'-triphosphate = RNA(n+1) + diphosphate. DNA-dependent RNA polymerase catalyzes the transcription of DNA into RNA using the four ribonucleoside triphosphates as substrates. The chain is DNA-directed RNA polymerase subunit beta' from Heliobacterium modesticaldum (strain ATCC 51547 / Ice1).